The sequence spans 209 residues: Neurotrophin-4 (209 aa).

A signal peptide spans 1-21 (MLPRHSCSLLLFLLLLPSVPM). Residues 22–79 (EPQPPSSTLPPFLAPEWDLLSPRVALSRGTPAGPPLLFLLEAGAYGEPAGAPANRSRR) constitute a propeptide that is removed on maturation. An N-linked (GlcNAc...) asparagine glycan is attached at asparagine 75. 3 cysteine pairs are disulfide-bonded: cysteine 96-cysteine 169, cysteine 140-cysteine 198, and cysteine 157-cysteine 200.

Belongs to the NGF-beta family. Expressed in thymus, muscle, ovary, brain, heart, stomach and kidney. Expressed in both embryo and adult tissues.

It is found in the secreted. Target-derived survival factor for peripheral sensory sympathetic neurons. May promote ameloblast differentiation and subsequent reduction in proliferation of ameloblasts. The protein is Neurotrophin-4 (Ntf4) of Rattus norvegicus (Rat).